The chain runs to 1191 residues: Homeodomain-interacting protein kinase 3 (1191 aa).

Lys-27 participates in a covalent cross-link: Glycyl lysine isopeptide (Lys-Gly) (interchain with G-Cter in SUMO2). Positions 197–525 constitute a Protein kinase domain; it reads YEVLDFLGRG…PIETLNHPFV (329 aa). Residues 203–211 and Lys-226 each bind ATP; that span reads LGRGTFGQV. Asp-322 acts as the Proton acceptor in catalysis. Phosphotyrosine is present on Tyr-359. The interaction with AR stretch occupies residues 766–920; the sequence is QNRSNSLQNT…NSMSDDEQES (155 aa). Residues 774–867 form an interaction with FAS region; that stretch reads NTNVPHSAFI…SPRPSLRECK (94 aa). Residues 801-828 form a disordered region; it reads TQDNHTSEGEARTCHEASVRQDSSVSDK. A compositionally biased stretch (basic and acidic residues) spans 802-828; it reads QDNHTSEGEARTCHEASVRQDSSVSDK. The interaction with UBL1 stretch occupies residues 846–856; the sequence is ITISSDTDDEE. Residues 888-905 show a composition bias toward low complexity; sequence SSPDSTLSTSSSGQSSPS. Disordered stretches follow at residues 888 to 960 and 993 to 1022; these read SSPD…TCAG and TCQP…KPTS. The span at 1008-1022 shows a compositional bias: polar residues; it reads NQPSASAARQQKPTS.

This sequence belongs to the protein kinase superfamily. CMGC Ser/Thr protein kinase family. HIPK subfamily. As to quaternary structure, interacts with Nkx1-2. Interacts with FAS and DAXX. Probably part of a complex consisting of HIPK3, FAS and FADD. Interacts with UBL1/SUMO-1. Interacts with and stabilizes ligand-bound androgen receptor (AR). Autophosphorylated. Autophosphorylation is not required for catalytic activity. In terms of processing, may be sumoylated.

It is found in the nucleus. The catalysed reaction is L-seryl-[protein] + ATP = O-phospho-L-seryl-[protein] + ADP + H(+). The enzyme catalyses L-threonyl-[protein] + ATP = O-phospho-L-threonyl-[protein] + ADP + H(+). Seems to negatively regulate apoptosis by promoting FADD phosphorylation. Enhances androgen receptor-mediated transcription. May act as a transcriptional corepressor for NK homeodomain transcription factors. The sequence is that of Homeodomain-interacting protein kinase 3 (Hipk3) from Rattus norvegicus (Rat).